Reading from the N-terminus, the 350-residue chain is Serine/threonine-protein kinase SRK2F (350 aa).

Positions 4-260 (YDILRDLGSG…VPEIEKHPWF (257 aa)) constitute a Protein kinase domain. ATP-binding positions include 10 to 18 (LGSGNFGVA) and Lys33. The Proton acceptor role is filled by Asp123. Positions 270-303 (EEEKCDNGVEEEEEEEEKCRQSVEEIVKIIEEAR) form a coiled coil.

The protein belongs to the protein kinase superfamily. Ser/Thr protein kinase family. Expressed in seedlings.

It catalyses the reaction L-seryl-[protein] + ATP = O-phospho-L-seryl-[protein] + ADP + H(+). It carries out the reaction L-threonyl-[protein] + ATP = O-phospho-L-threonyl-[protein] + ADP + H(+). The polypeptide is Serine/threonine-protein kinase SRK2F (SRK2F) (Arabidopsis thaliana (Mouse-ear cress)).